The sequence spans 681 residues: MTVPAARSGRKVYFIGLNAVPFLPLVAGLLRTYAEQDPRVAAGYDFQEPVFLVDGVQEMAAGITDPDVLALSCYVWNFRRQMKVARLVKERHPGMLVVAGGPHVPDRPGDFFARHPYVDVLVHGEGETAFRELLIERLADHPDYTRVPGVSVRHGTEAVPGRPAERLPRRIETPSPYLLGVMDGAVATCRQRDLRFYALWETNRGCPYSCAFCDWGSATMSALRLFDAERLQEEIEWFAEHDVEDLFVCDANFGILPRDLEIARALADARAATGAPKLIRVNFAKNSNDRVFEISKTWHDADLLMGTTLSMQSTDLDVLEAIDRKNIGLENYRKLQQRYATENIHTYTELILGLPLESPRSFRDGIGSLLEAGNHEDIRVYEFGILPNAPINTPEKIAGYGLRTVPKRLYVEEPGTPDDEAETVDMVMETNAMSRDEWVDCFGFVQAVQFLHNGCYTRYLSMYLRQRHDIGYTAFYERLQQYFGARPDTVLGSIYLRMRKLYHDYIDIPELPLANLVASQPDMAADLARYGKRRGWTIDNWGWLRIANDFERTYTELRDFVAALGVDDTSDPDLAEVFRFQQDVMLRPDYDPAAGRTTEYTADWPGYFTTGELRRRPVRMRLADQRFGANGRYTPVPGDLKAFARAAIGPSYPVSRIGHYRHRFEAAEVTSPAEPVLTEQR.

One can recognise a B12-binding domain in the interval 1-144 (MTVPAARSGR…IERLADHPDY (144 aa)). Positions 18, 72, 74, 75, 103, 126, and 127 each coordinate cob(II)alamin. One can recognise a Radical SAM core domain in the interval 192-417 (RDLRFYALWE…RLYVEEPGTP (226 aa)). Residues Cys206 and Cys210 each coordinate [4Fe-4S] cluster. Phe212 is a 5'-deoxyadenosine binding site. Position 213 (Cys213) interacts with [4Fe-4S] cluster. Cob(II)alamin is bound by residues Asp214 and Cys249. 5'-deoxyadenosine contacts are provided by Gln312, Glu349, and Gly384.

This sequence belongs to the methyltransferase superfamily. The cofactor is [4Fe-4S] cluster. Requires cob(II)alamin as cofactor.

It carries out the reaction (2R,3R,5S)-2-(S-pantetheinyl)-carbapenam-3-carboxylate + AH2 + 2 S-adenosyl-L-methionine = (2R,3R,5S,6R)-6-(methyl)-2-(S-pantetheinyl)-carbapenam-3-carboxylate + 5'-deoxyadenosine + L-methionine + A + S-adenosyl-L-homocysteine + 2 H(+). The enzyme catalyses (2R,3R,5S,6R)-6-(methyl)-2-(S-pantetheinyl)-carbapenam-3-carboxylate + AH2 + 2 S-adenosyl-L-methionine = (2R,3R,5S,6R)-6-(ethyl)-2-(S-pantetheinyl)-carbapenam-3-carboxylate + 5'-deoxyadenosine + L-methionine + A + S-adenosyl-L-homocysteine + 2 H(+). The protein operates within antibiotic biosynthesis. In terms of biological role, methyltransferase involved in the biosynthesis of the beta-lactam carbapenem antibiotic thienamycin. Catalyzes two consecutive S-adenosyl-L-methionine-dependent methylations to build out the C6-ethyl side chain in a stereocontrolled manner. In vitro can use methyl viologen and NADPH as the iron-sulfur cluster reductants. The chain is 2-(S-pantetheinyl)-carbapenam-3-carboxylate methyltransferase from Streptantibioticus cattleyicolor (strain ATCC 35852 / DSM 46488 / JCM 4925 / NBRC 14057 / NRRL 8057) (Streptomyces cattleya).